A 172-amino-acid chain; its full sequence is Ribosome maturation factor RimM (172 aa).

One can recognise a PRC barrel domain in the interval 95–168 (DDGEFYYHEI…RVDVEILEGL (74 aa)).

Belongs to the RimM family. As to quaternary structure, binds ribosomal protein uS19.

The protein localises to the cytoplasm. In terms of biological role, an accessory protein needed during the final step in the assembly of 30S ribosomal subunit, possibly for assembly of the head region. Essential for efficient processing of 16S rRNA. May be needed both before and after RbfA during the maturation of 16S rRNA. It has affinity for free ribosomal 30S subunits but not for 70S ribosomes. In Streptococcus pneumoniae (strain P1031), this protein is Ribosome maturation factor RimM.